A 215-amino-acid chain; its full sequence is Cytochrome b6 (215 aa).

A helical transmembrane segment spans residues 32–52; that stretch reads IFYCLGGITLVCFLIQFATGF. C35 contributes to the heme c binding site. The heme b site is built by H86 and H100. 3 consecutive transmembrane segments (helical) span residues 90 to 110, 116 to 136, and 186 to 206; these read ASMM…TGGF, LTWV…VTGY, and AHTF…FLMI. Heme b-binding residues include H187 and H202.

This sequence belongs to the cytochrome b family. PetB subfamily. In terms of assembly, the 4 large subunits of the cytochrome b6-f complex are cytochrome b6, subunit IV (17 kDa polypeptide, PetD), cytochrome f and the Rieske protein, while the 4 small subunits are PetG, PetL, PetM and PetN. The complex functions as a dimer. The cofactor is heme b. Requires heme c as cofactor.

The protein localises to the cellular thylakoid membrane. Its function is as follows. Component of the cytochrome b6-f complex, which mediates electron transfer between photosystem II (PSII) and photosystem I (PSI), cyclic electron flow around PSI, and state transitions. This Nostoc punctiforme (strain ATCC 29133 / PCC 73102) protein is Cytochrome b6.